A 393-amino-acid chain; its full sequence is G protein-activated inward rectifier potassium channel 3 (393 aa).

The interval 1-23 is disordered; sequence MAQENAAFSPGSEEPPRRRGRQR. Residues 1–57 lie on the Cytoplasmic side of the membrane; the sequence is MAQENAAFSPGSEEPPRRRGRQRYVEKDGRCNVQQGNVRETYRYLTDLFTTLVDLQW. A helical transmembrane segment spans residues 58 to 82; sequence RLSLLFFVLAYALTWLFFGAIWWLI. Over 83–106 the chain is Extracellular; it reads AYGRGDLEHLEDTAWTPCVNNLNG. Positions 107-118 form an intramembrane region, helical; Pore-forming; it reads FVAAFLFSIETE. An intramembrane region (pore-forming) is located at residues 119–125; the sequence is TTIGYGH. Residues 120-125 carry the Selectivity filter motif; the sequence is TIGYGH. The Extracellular portion of the chain corresponds to 126–134; sequence RVITDQCPE. A helical transmembrane segment spans residues 135–156; sequence GIVLLLLQAILGSMVNAFMVGC. The Cytoplasmic segment spans residues 157–393; that stretch reads MFVKISQPNK…LPPPESESKV (237 aa). Positions 360 to 393 are disordered; sequence KVEEEGAGEGAGAGDGADKEQNGCLPPPESESKV. A compositionally biased stretch (pro residues) spans 384 to 393; sequence LPPPESESKV. The short motif at 390 to 393 is the PDZ-binding element; the sequence is ESKV.

Belongs to the inward rectifier-type potassium channel (TC 1.A.2.1) family. KCNJ9 subfamily. Associates with KCNJ3/GIRK1 to form a G-protein-activated heteromultimer pore-forming unit. Interacts (via PDZ-binding motif) with SNX27 (via PDZ domain); the interaction is required when endocytosed to prevent degradation in lysosomes and promote recycling to the plasma membrane.

The protein resides in the membrane. The enzyme catalyses K(+)(in) = K(+)(out). In terms of biological role, this receptor is controlled by G proteins. Inward rectifier potassium channels are characterized by a greater tendency to allow potassium to flow into the cell rather than out of it. Their voltage dependence is regulated by the concentration of extracellular potassium; as external potassium is raised, the voltage range of the channel opening shifts to more positive voltages. The inward rectification is mainly due to the blockage of outward current by internal magnesium. Unable to produce channel activity when expressed alone but forms a functional channel in association with KCNJ3/GIRK1. This chain is G protein-activated inward rectifier potassium channel 3 (Kcnj9), found in Rattus norvegicus (Rat).